A 573-amino-acid polypeptide reads, in one-letter code: Developmental and secondary metabolism regulator veA (573 aa).

The segment covering 1–11 (MATLAAPPPPL) has biased composition (pro residues). 2 disordered regions span residues 1-24 (MATL…SRIT) and 39-63 (QPKR…DPPP). The Velvet domain maps to 27 to 230 (GKKITYKLNI…AEQGCRVRIR (204 aa)). A Nuclear localization signal motif is present at residues 41 to 46 (KRARAC). Residues Thr167 and Thr170 each carry the phosphothreonine modification. Residue Ser183 is modified to Phosphoserine. Disordered regions lie at residues 236–295 (RRRG…RRPS), 307–367 (YQRP…SYQS), and 384–573 (SHIP…ATMR). Positions 241 to 260 (KRTEDYDYDNERGYNNRRPD) are enriched in basic and acidic residues. At Tyr254 the chain carries Phosphotyrosine. 2 stretches are compositionally biased toward pro residues: residues 318–339 (SSTP…PSTP) and 347–361 (PAPP…PPLH). Residues 387 to 412 (PQQTTTPTHPYSPRSSISHSRNQSIS) are compositionally biased toward low complexity. Over residues 452–493 (PSVNSRSKTPSNMITSLPPIQSLSELPSTTSQPSSAIGSSPA) the composition is skewed to polar residues. A PEST region spans residues 459-498 (KTPSNMITSLPPIQSLSELPSTTSQPSSAIGSSPANEPGP). Residues 510–522 (RTYEESFGHDDRP) are compositionally biased toward basic and acidic residues.

Belongs to the velvet family. VeA subfamily. Component of the heterotrimeric velvet complex composed of laeA, veA and velB; VeA acting as a bridging protein between laeA and velB. Interacts with the light-sensing phytochrome fphA. Interacts with llmF. In terms of processing, phosphorylated at Thr-167, Thr-170, Ser-183 and Tyr-254. Thr-167 should be phosphorylated and T170 and S183 should be dephosphorylated to achieve light induction of conidiation. Phosphorylation of Ser-183 and Tyr-254 influence sterigmatocystin production in a light-independent manner. Phosphorylation of Thr-167 and Thr-170 modulates expression of veA.

The protein localises to the nucleus. It localises to the cytoplasm. Component of the velvet transcription factor complex that controls sexual/asexual developmental ratio in response to light, promoting sexual development in the darkness while stimulating asexual sporulation under illumination. The velvet complex acts as a global regulator for secondary metabolite gene expression. Controls the expression of the sterigmatocystin and penicillin gene clusters. Represses the cryptic ors gene cluster producing orsellinic acid and its F9775 derivatives in a laeA-independent manner. Required for full induction of faoA gene expression by fructosyl amines. Positively regulates the expression of the early sexual development gene esdC. Controls the expression of mannoprotein mnpA. This Emericella nidulans (strain FGSC A4 / ATCC 38163 / CBS 112.46 / NRRL 194 / M139) (Aspergillus nidulans) protein is Developmental and secondary metabolism regulator veA.